The following is a 2442-amino-acid chain: CREB-binding protein (2442 aa).

Disordered stretches follow at residues 1–41 (MAEN…NDLP) and 74–179 (LRGG…CMNA). The residue at position 2 (Ala-2) is an N-acetylalanine. Positions 20 to 30 (PGFSANDSTDF) are enriched in polar residues. The span at 80–90 (SSINPGIGNVS) shows a compositional bias: low complexity. Ser-121 bears the Phosphoserine mark. The span at 122–131 (PLSQGDSSAP) shows a compositional bias: polar residues. Ser-124 carries the phosphoserine; by ATM modification. A compositionally biased stretch (low complexity) spans 136–150 (QAASTSGPTPAASQA). Polar residues predominate over residues 151–172 (LNPQAQKQVGLATSSPATSQTG). At Arg-220 the chain carries Omega-N-methylarginine. The tract at residues 227–410 (PTPAMQGASS…GKACQVAHCA (184 aa)) is interaction with SRCAP. The disordered stretch occupies residues 266–290 (KMGITGNTSPFGQPFSQAGGQPMGA). A compositionally biased stretch (polar residues) spans 270-284 (TGNTSPFGQPFSQAG). The segment at 347–433 (DPEKRKLIQQ…RHDCPVCLPL (87 aa)) adopts a TAZ-type 1 zinc-finger fold. The Zn(2+) site is built by His-363, Cys-367, Cys-380, Cys-385, His-394, Cys-398, Cys-404, Cys-409, His-418, Cys-422, Cys-427, and Cys-430. The KIX domain occupies 587–666 (GVRKGWHEHV…KIYKIQKELE (80 aa)). Asymmetric dimethylarginine occurs at positions 601 and 625. Residue Lys-657 is modified to N6-acetyllysine. Polar residues-rich tracts occupy residues 794 to 805 (LPQNQFPSSSGA) and 814 to 823 (PAQTGVSQGQ). A disordered region spans residues 794–1083 (LPQNQFPSSS…STSPSQPRKK (290 aa)). Pro residues-rich tracts occupy residues 844 to 860 (PCPP…PPPA) and 876 to 885 (GMTPPQPAAP). Composition is skewed to low complexity over residues 886-929 (TQPS…VTPQ) and 937-952 (PSVA…PTPV). A compositionally biased stretch (polar residues) spans 973–988 (PTPSSVASAETNSQQP). Lys-998 participates in a covalent cross-link: Glycyl lysine isopeptide (Lys-Gly) (interchain with G-Cter in SUMO1). A compositionally biased stretch (basic and acidic residues) spans 1011–1021 (GESKGEPRSEM). Lys-1014 is modified (N6-acetyllysine). Ser-1030 carries the post-translational modification Phosphoserine. A compositionally biased stretch (basic and acidic residues) spans 1032 to 1059 (VKEETDIAEQKSEPMEVDEKKPEVKVEV). Residues Lys-1033 and Lys-1056 each participate in a glycyl lysine isopeptide (Lys-Gly) (interchain with G-Cter in SUMO1) cross-link. A compositionally biased stretch (low complexity) spans 1066–1078 (SSNGTASQSTSPS). Ser-1076 is subject to Phosphoserine. A Bromo domain is found at 1085 to 1192 (FKPEELRQAL…EVFEQEIDPV (108 aa)). An interaction with histone region spans residues 1124–1170 (DYFDIVKNPMDLSTIKRKLDTGQYQEPWQYVDDVWLMFNNAWLYNRK). The segment at 1162-1180 (NNAWLYNRKTSRVYKFCSK) is interaction with ASF1A. Lys-1216 carries the post-translational modification N6-acetyllysine. One can recognise a CBP/p300-type HAT domain in the interval 1323 to 1700 (KFSAKRLQTT…MLVELHTQGQ (378 aa)). 2 positions are modified to phosphoserine; by IKKA: Ser-1382 and Ser-1386. Positions 1433 to 1435 (YLD) are interaction with histone. Residues 1434–1436 (LDS), 1446–1447 (RT), Ile-1493, Arg-1498, and Trp-1502 each bind acetyl-CoA. Positions 1460–1891 (YVKKLGYVTG…LPSPTSAPPG (432 aa)) are interaction with TRERF1. Positions 1556-1568 (LEQEEEERKKEES) are enriched in basic and acidic residues. The segment at 1556–1615 (LEQEEEERKKEESTAASETTEGSQGDSKNAKKKNNKKTNKNKSSISRANKKKPSMPNVSN) is disordered. Residues Lys-1583, Lys-1591, Lys-1592, Lys-1595, and Lys-1597 each carry the N6-acetyllysine modification. Over residues 1585-1595 (AKKKNNKKTNK) the composition is skewed to basic residues. The ZZ-type zinc finger occupies 1702–1750 (RFVYTCNECKHHVETRWHCTVCEDYDLCINCYNTKSHAHKMVKWGLGLD). Cys-1707, Cys-1710, Cys-1720, Cys-1723, Cys-1729, Cys-1732, His-1738, and His-1740 together coordinate Zn(2+). Lys-1741 and Lys-1744 each carry N6-acetyllysine. Ser-1763 carries the post-translational modification Phosphoserine. Residues 1765–1846 (QESRRLSIQR…KCPVPFCLNI (82 aa)) form a TAZ-type 2 zinc finger. 2 disordered regions span residues 1874 to 1959 (TRNV…VEAA) and 1977 to 2028 (INNS…PLPQ). Over residues 1900 to 1912 (PQTPQPPAQPQPS) the composition is skewed to pro residues. The segment covering 1925-1940 (ARTQPPTTVSTGKPTS) has biased composition (polar residues). Over residues 1943–1954 (PAPPPPAQPPPA) the composition is skewed to pro residues. A compositionally biased stretch (low complexity) spans 2018–2027 (PGQWQQAPLP). A phosphoserine mark is found at Ser-2063, Ser-2076, and Ser-2079. Low complexity-rich tracts occupy residues 2112 to 2137 (QPGM…HQQP), 2146 to 2160 (QAGV…QQQA), 2196 to 2219 (QLLQ…QGSA), 2228 to 2263 (HGQF…SMGQ), and 2294 to 2305 (RILQQQQMKQQI). Disordered regions lie at residues 2112–2263 (QPGM…SMGQ) and 2294–2433 (RILQ…TTGD). 2 stretches are compositionally biased toward polar residues: residues 2315–2327 (SPQQ…QPQA) and 2334–2343 (QIATSLSNQV). A compositionally biased stretch (pro residues) spans 2349-2372 (VQSPRPQSQPPHSSPSPRIQPQPS). Ser-2351 bears the Phosphoserine mark. Positions 2411 to 2424 (QLNTPSRSALSSEL) are enriched in polar residues.

As to quaternary structure, found in a complex containing NCOA2; NCOA3; IKKA; IKKB and IKBKG. Probably part of a complex with HIF1A and EP300. Interacts with GATA1; the interaction results in acetylation and enhancement of transcriptional activity of GATA1. Interacts with MAF and ZCCHC12. Interacts with DAXX; the interaction is dependent on CBP sumoylation and results in suppression of the transcriptional activity via recruitment of HDAC2 to DAXX. Interacts with phosphorylated CREB1. Interacts with CITED4 (C-terminal region). Interacts (via the TAZ-type 1 domain) with HIF1A. Interacts with SRCAP, CARM1, ELF3, MLLT7/FOXO4, N4BP2, NCOA1, NCOA3, NCOA6, PCAF, DDX5, DDX17, PELP1, PML, SMAD1, SMAD2, SMAD3, SPIB and TRERF1. Interacts with KLF1; the interaction results in acetylation of KLF1 and enhancement of its transcriptional activity. Interacts with MTDH. Interacts with NFATC4. Interacts with MAFG; the interaction acetylates MAFG in the basic region and stimulates NFE2 transcriptional activity through increasing its DNA-binding activity. Interacts with IRF2; the interaction acetylates IRF2 and regulates its activity on the H4 promoter. Interacts with IRF3 (when phosphorylated); forming the dsRNA-activated factor 1 (DRAF1), a complex which activates the transcription of the type I interferon genes. Interacts (via N-terminus) with SS18L1/CREST (via C-terminus). Interacts with MECOM. Interacts with CITED1 (via C-terminus). Interacts with FOXO1; the interaction acetylates FOXO1 and inhibits its transcriptional activity. Interacts with NPAS2, CLOCK and BMAL1. Interacts with ASF1A and ASF1B; this promotes histone acetylation. Interacts with acetylated TP53/p53 and with the acetylated histones H3 and H4. Interacts (via transactivation domain and C-terminus) with PCNA; the interaction occurs on chromatin in UV-irradiated damaged cells. Interacts with DHX9 (via N-terminus); this interaction mediates association with RNA polymerase II holoenzyme and stimulates CREB-dependent transcriptional activation. Interacts with SMAD4; negatively regulated by ZBTB7A. Interacts with DUX4 (via C-terminus). Forms a complex with KMT2A and CREB1. Interacts with DDX3X; this interaction may facilitate HNF4A acetylation. Interacts with MSX1; the interaction may inhibit MSX1 autoinactivation. Interacts with ACSS2. (Microbial infection) Interacts with HTLV-1 Tax, p30II and HBZ. In terms of assembly, (Microbial infection) Interacts with human herpes virus 8/HHV-8 protein vIRF-1; this interaction inhibits CREBBP binding to IRF3. As to quaternary structure, (Microbial infection) Interacts with HIV-1 Tat. Post-translationally, methylation of the KIX domain by CARM1 blocks association with CREB. This results in the blockade of CREB signaling, and in activation of apoptotic response. In terms of processing, phosphorylated by CHUK/IKKA at Ser-1382 and Ser-1386; these phosphorylations promote cell growth by switching the binding preference of CREBBP from TP53 to NF-kappa-B. Phosphorylated by _ at Ser-124 in response to DNA damage, promoting interaction with MRE11 and lactylation of MRE11. Sumoylation negatively regulates transcriptional activity via the recruitment of DAAX. Post-translationally, autoacetylation is required for binding to protein substrates, such as acetylated histones and acetylated TP53/p53. Autoacetylation is induced by glucose and fatty acids.

Its subcellular location is the cytoplasm. It localises to the nucleus. It catalyses the reaction L-lysyl-[histone] + acetyl-CoA = N(6)-acetyl-L-lysyl-[histone] + CoA + H(+). The catalysed reaction is L-lysyl-[protein] + acetyl-CoA = N(6)-acetyl-L-lysyl-[protein] + CoA + H(+). It carries out the reaction (S)-lactoyl-CoA + L-lysyl-[protein] = N(6)-[(S)-lactoyl]-L-lysyl-[protein] + CoA + H(+). In terms of biological role, acetylates histones, giving a specific tag for transcriptional activation. Mediates acetylation of histone H3 at 'Lys-18' and 'Lys-27' (H3K18ac and H3K27ac, respectively). Also acetylates non-histone proteins, like DDX21, FBL, IRF2, MAFG, NCOA3, POLR1E/PAF53 and FOXO1. Binds specifically to phosphorylated CREB and enhances its transcriptional activity toward cAMP-responsive genes. Acts as a coactivator of ALX1. Acts as a circadian transcriptional coactivator which enhances the activity of the circadian transcriptional activators: NPAS2-BMAL1 and CLOCK-BMAL1 heterodimers. Acetylates PCNA; acetylation promotes removal of chromatin-bound PCNA and its degradation during nucleotide excision repair (NER). Acetylates POLR1E/PAF53, leading to decreased association of RNA polymerase I with the rDNA promoter region and coding region. Acetylates DDX21, thereby inhibiting DDX21 helicase activity. Acetylates FBL, preventing methylation of 'Gln-105' of histone H2A (H2AQ104me). In addition to protein acetyltransferase, can use different acyl-CoA substrates, such as lactoyl-CoA, and is able to mediate protein lactylation. Catalyzes lactylation of MRE11 in response to DNA damage, thereby promoting DNA double-strand breaks (DSBs) via homologous recombination (HR). Functions as a transcriptional coactivator for SMAD4 in the TGF-beta signaling pathway. This Homo sapiens (Human) protein is CREB-binding protein.